The following is an 818-amino-acid chain: IQ and AAA domain-containing protein 1-like (818 aa).

The region spanning 206 to 235 (QGQAAVTIQKVWKGYLQRKRTQQDRRMEME) is the IQ domain. Disordered regions lie at residues 344 to 377 (QMQENRKKEQEKSKEKGKDEKEKKKGKEEKAKKG) and 458 to 482 (EERPLRAPKKTPGKKTGKKKEKDLT). Basic residues predominate over residues 463-476 (RAPKKTPGKKTGKK). 567–574 (GPSGMGKK) lines the ATP pocket. Residues 795–818 (SMKHRMDQLEAEEAKLDKEKKKRK) form a disordered region. Basic and acidic residues predominate over residues 798–818 (HRMDQLEAEEAKLDKEKKKRK).

Belongs to the AAA ATPase family.

The protein is IQ and AAA domain-containing protein 1-like (IQCA1L) of Homo sapiens (Human).